Consider the following 434-residue polypeptide: Trigger factor (434 aa).

The 86-residue stretch at 161 to 246 (EDRVTVDFTG…LKKVEQRELP (86 aa)) folds into the PPIase FKBP-type domain.

The protein belongs to the FKBP-type PPIase family. Tig subfamily.

It localises to the cytoplasm. The enzyme catalyses [protein]-peptidylproline (omega=180) = [protein]-peptidylproline (omega=0). Involved in protein export. Acts as a chaperone by maintaining the newly synthesized protein in an open conformation. Functions as a peptidyl-prolyl cis-trans isomerase. The chain is Trigger factor from Sodalis glossinidius (strain morsitans).